A 440-amino-acid chain; its full sequence is Enolase 1-2 (440 aa).

Substrate is bound by residues H160 and E169. The active-site Proton donor is the E212. The Mg(2+) site is built by D247, E296, and D321. Substrate is bound by residues E296 and D321. The active-site Proton acceptor is K346. Substrate-binding positions include 373-376 (SHRS) and K397.

The protein belongs to the enolase family. As to quaternary structure, homodimer. The cofactor is Mg(2+).

It localises to the cytoplasm. The catalysed reaction is (2R)-2-phosphoglycerate = phosphoenolpyruvate + H2O. Its pathway is carbohydrate degradation; glycolysis; pyruvate from D-glyceraldehyde 3-phosphate: step 4/5. The chain is Enolase 1-2 (eno102) from Schizosaccharomyces pombe (strain 972 / ATCC 24843) (Fission yeast).